We begin with the raw amino-acid sequence, 135 residues long: uncharacterized protein (135 aa).

The chain crosses the membrane as a helical span at residues 35 to 55; it reads VVLVLIGATIILVVISVLVVS.

The protein resides in the membrane. This is an uncharacterized protein from Saccharomyces cerevisiae (strain ATCC 204508 / S288c) (Baker's yeast).